Here is a 324-residue protein sequence, read N- to C-terminus: uncharacterized protein (324 aa).

Helical transmembrane passes span 4-24, 63-83, 106-128, 132-151, 179-199, 209-229, 246-266, and 282-302; these read GNKV…PEFM, AALL…EGIL, ALFY…ISFL, WQVQ…SHLL, LADI…AVTL, GLDG…LVIM, LETA…LYTL, and GTWK…GWFM.

This sequence belongs to the TerC family.

The protein resides in the cell membrane. This is an uncharacterized protein from Bacillus subtilis (strain 168).